The chain runs to 164 residues: Large ribosomal subunit protein uL10 (164 aa).

It belongs to the universal ribosomal protein uL10 family. As to quaternary structure, part of the ribosomal stalk of the 50S ribosomal subunit. The N-terminus interacts with L11 and the large rRNA to form the base of the stalk. The C-terminus forms an elongated spine to which L12 dimers bind in a sequential fashion forming a multimeric L10(L12)X complex.

Functionally, forms part of the ribosomal stalk, playing a central role in the interaction of the ribosome with GTP-bound translation factors. The polypeptide is Large ribosomal subunit protein uL10 (Aliivibrio salmonicida (strain LFI1238) (Vibrio salmonicida (strain LFI1238))).